Consider the following 301-residue polypeptide: GTPase Era (301 aa).

An Era-type G domain is found at 7–175 (YCGFIAIVGR…AAIVRKHLPE (169 aa)). The G1 stretch occupies residues 15-22 (GRPNVGKS). 15 to 22 (GRPNVGKS) lines the GTP pocket. The interval 41–45 (QTTRH) is G2. The tract at residues 62–65 (DTPG) is G3. Residues 62–66 (DTPGL) and 124–127 (NKVD) contribute to the GTP site. The segment at 124 to 127 (NKVD) is G4. Positions 154–156 (ISA) are G5. The KH type-2 domain occupies 206–283 (LGAELPYSVT…HLELWVKVKS (78 aa)).

This sequence belongs to the TRAFAC class TrmE-Era-EngA-EngB-Septin-like GTPase superfamily. Era GTPase family. In terms of assembly, monomer.

The protein localises to the cytoplasm. It is found in the cell inner membrane. Its function is as follows. An essential GTPase that binds both GDP and GTP, with rapid nucleotide exchange. Plays a role in 16S rRNA processing and 30S ribosomal subunit biogenesis and possibly also in cell cycle regulation and energy metabolism. The sequence is that of GTPase Era from Shigella flexneri serotype 5b (strain 8401).